The primary structure comprises 546 residues: ATP synthase subunit alpha (546 aa).

An ATP-binding site is contributed by 172–179 (GDRKTGKT). 2 stretches are compositionally biased toward polar residues: residues 511–520 (FRTTEGNNLG) and 536–546 (TELNVSRKTAK). The tract at residues 511 to 546 (FRTTEGNNLGTEAPVDPLAADDVNKTELNVSRKTAK) is disordered.

Belongs to the ATPase alpha/beta chains family. F-type ATPases have 2 components, CF(1) - the catalytic core - and CF(0) - the membrane proton channel. CF(1) has five subunits: alpha(3), beta(3), gamma(1), delta(1), epsilon(1). CF(0) has three main subunits: a(1), b(2) and c(9-12). The alpha and beta chains form an alternating ring which encloses part of the gamma chain. CF(1) is attached to CF(0) by a central stalk formed by the gamma and epsilon chains, while a peripheral stalk is formed by the delta and b chains.

It localises to the cell membrane. It carries out the reaction ATP + H2O + 4 H(+)(in) = ADP + phosphate + 5 H(+)(out). Produces ATP from ADP in the presence of a proton gradient across the membrane. The alpha chain is a regulatory subunit. This is ATP synthase subunit alpha from Corynebacterium aurimucosum (strain ATCC 700975 / DSM 44827 / CIP 107346 / CN-1) (Corynebacterium nigricans).